A 499-amino-acid polypeptide reads, in one-letter code: Putative DBH-like monooxygenase protein 2 (499 aa).

An N-terminal signal peptide occupies residues 1-16 (MAHDLLFRLFPLLALG). Residues 40 to 156 (NVIFLRWDFD…NTVRVLAAYG (117 aa)) form the DOMON domain. The active site involves tyrosine 209. Disulfide bonds link cysteine 211–cysteine 261 and cysteine 248–cysteine 271. Residue asparagine 236 is glycosylated (N-linked (GlcNAc...) asparagine). Positions 241 and 242 each coordinate Cu cation. A glycan (N-linked (GlcNAc...) asparagine) is linked at asparagine 250. Histidine 308, histidine 389, and histidine 391 together coordinate Cu cation. Intrachain disulfides connect cysteine 365–cysteine 480 and cysteine 443–cysteine 465. The active site involves histidine 389. Asparagine 404 carries N-linked (GlcNAc...) asparagine glycosylation. Cu cation is bound at residue methionine 464. Asparagine 476 carries an N-linked (GlcNAc...) asparagine glycan.

Belongs to the copper type II ascorbate-dependent monooxygenase family. Cu(2+) serves as cofactor.

This chain is Putative DBH-like monooxygenase protein 2 (MOXD2P), found in Homo sapiens (Human).